The sequence spans 376 residues: Polygalacturonase (376 aa).

The N-terminal stretch at 1–20 is a signal peptide; sequence MASSLKLGLIALLGATAVNA. The cysteines at positions 39 and 57 are disulfide-linked. A PbH1 1 repeat occupies 170–208; the sequence is AKELTLSGITVDTADGDSNGGHNTDAFDVGSSNGVYITS. Asp-215 functions as the Proton donor in the catalytic mechanism. A disulfide bridge links Cys-217 with Cys-233. 4 PbH1 repeats span residues 223 to 243, 252 to 273, 281 to 303, and 315 to 360; these read GTNVHFTGAQCTGGHGISIGS, VDGVTVESCTIKDSDNGVRIKT, VQGVTYKDITLSGIAKYGIVIEQ, and TSGV…SITG. His-237 is a catalytic residue. 2 cysteine pairs are disulfide-bonded: Cys-343–Cys-348 and Cys-367–Cys-376.

It belongs to the glycosyl hydrolase 28 family.

Its subcellular location is the secreted. The catalysed reaction is (1,4-alpha-D-galacturonosyl)n+m + H2O = (1,4-alpha-D-galacturonosyl)n + (1,4-alpha-D-galacturonosyl)m.. The polypeptide is Polygalacturonase (PGG1) (Penicillium griseoroseum).